The chain runs to 235 residues: MSAPWAEWDHIVKIDPDKTLADGETFQDVCATGTDALEIGGTTGMTEEKMARVVEATAAHDIPVYIEPSNVGAVVHDEDLDGYFVPTVLNAGDVFWTTGAHKEWVRLDGDIDWDRTFTEAYIVLNPDASVADYTEADCNLDIDEVAAYAEVAEKMFGQEIVYVEYSGMLGDPEMVQAATDATEEATVFYGGGIRDYESAYTMRQHADTVIVGDLVHDEGADAVRETVDGAKDAAD.

Sn-glycerol 1-phosphate is bound at residue K13. 2 residues coordinate Mg(2+): D15 and T42. Residues Y162–G167, G192, and G212–D213 each bind sn-glycerol 1-phosphate.

Belongs to the GGGP/HepGP synthase family. Group I subfamily. Mg(2+) is required as a cofactor.

The protein resides in the cytoplasm. It carries out the reaction sn-glycerol 1-phosphate + (2E,6E,10E)-geranylgeranyl diphosphate = sn-3-O-(geranylgeranyl)glycerol 1-phosphate + diphosphate. Its pathway is membrane lipid metabolism; glycerophospholipid metabolism. Its function is as follows. Prenyltransferase that catalyzes the transfer of the geranylgeranyl moiety of geranylgeranyl diphosphate (GGPP) to the C3 hydroxyl of sn-glycerol-1-phosphate (G1P). This reaction is the first ether-bond-formation step in the biosynthesis of archaeal membrane lipids. This is Geranylgeranylglyceryl phosphate synthase from Natronomonas pharaonis (strain ATCC 35678 / DSM 2160 / CIP 103997 / JCM 8858 / NBRC 14720 / NCIMB 2260 / Gabara) (Halobacterium pharaonis).